Here is a 305-residue protein sequence, read N- to C-terminus: tRNA pseudouridine synthase B (305 aa).

The active-site Nucleophile is the Asp-48.

Belongs to the pseudouridine synthase TruB family. Type 1 subfamily.

The catalysed reaction is uridine(55) in tRNA = pseudouridine(55) in tRNA. Functionally, responsible for synthesis of pseudouridine from uracil-55 in the psi GC loop of transfer RNAs. This chain is tRNA pseudouridine synthase B, found in Mannheimia succiniciproducens (strain KCTC 0769BP / MBEL55E).